We begin with the raw amino-acid sequence, 55 residues long: ATP synthase F(0) complex subunit 8 (55 aa).

A helical transmembrane segment spans residues 7 to 24 (NPWFFIMLLSWLTFSLII). Residues 35 to 55 (NPPSNKTTTHTKTTPWTWPWT) form a disordered region. The span at 37 to 55 (PSNKTTTHTKTTPWTWPWT) shows a compositional bias: low complexity.

This sequence belongs to the ATPase protein 8 family. In terms of assembly, component of the ATP synthase complex composed at least of ATP5F1A/subunit alpha, ATP5F1B/subunit beta, ATP5MC1/subunit c (homooctomer), MT-ATP6/subunit a, MT-ATP8/subunit 8, ATP5ME/subunit e, ATP5MF/subunit f, ATP5MG/subunit g, ATP5MK/subunit k, ATP5MJ/subunit j, ATP5F1C/subunit gamma, ATP5F1D/subunit delta, ATP5F1E/subunit epsilon, ATP5PF/subunit F6, ATP5PB/subunit b, ATP5PD/subunit d, ATP5PO/subunit OSCP. ATP synthase complex consists of a soluble F(1) head domain (subunits alpha(3) and beta(3)) - the catalytic core - and a membrane F(0) domain - the membrane proton channel (subunits c, a, 8, e, f, g, k and j). These two domains are linked by a central stalk (subunits gamma, delta, and epsilon) rotating inside the F1 region and a stationary peripheral stalk (subunits F6, b, d, and OSCP).

Its subcellular location is the mitochondrion membrane. Functionally, subunit 8, of the mitochondrial membrane ATP synthase complex (F(1)F(0) ATP synthase or Complex V) that produces ATP from ADP in the presence of a proton gradient across the membrane which is generated by electron transport complexes of the respiratory chain. ATP synthase complex consist of a soluble F(1) head domain - the catalytic core - and a membrane F(1) domain - the membrane proton channel. These two domains are linked by a central stalk rotating inside the F(1) region and a stationary peripheral stalk. During catalysis, ATP synthesis in the catalytic domain of F(1) is coupled via a rotary mechanism of the central stalk subunits to proton translocation. In vivo, can only synthesize ATP although its ATP hydrolase activity can be activated artificially in vitro. Part of the complex F(0) domain. This is ATP synthase F(0) complex subunit 8 from Chaetura pelagica (Chimney swift).